The following is an 890-amino-acid chain: Putative RNA-binding protein 15B (890 aa).

A disordered region spans residues 1-133 (MKRQSERDSS…AEPACPGSSA (133 aa)). Low complexity predominate over residues 10–20 (SPSGRGSSSSA). Composition is skewed to basic and acidic residues over residues 22–34 (RPRE…EAGG) and 66–78 (GHRD…DANH). Over residues 86-99 (SGSGAGGGGRGGKA) the composition is skewed to gly residues. 2 positions are modified to phosphoserine: S109 and S113. The span at 113–124 (SPLPPPPPPPGA) shows a compositional bias: pro residues. Residues 139-219 (KTLLISSLSP…RPLKVEPVYL (81 aa)) enclose the RRM 1 domain. Residue K213 forms a Glycyl lysine isopeptide (Lys-Gly) (interchain with G-Cter in SUMO2) linkage. Residues 219-253 (LRGGGGSSRRSSSSSAAASTPPPGPPAPADPLGYL) are disordered. The segment covering 226 to 237 (SRRSSSSSAAAS) has biased composition (low complexity). Residues 238-247 (TPPPGPPAPA) show a composition bias toward pro residues. Residues S265 and S267 each carry the phosphoserine modification. RRM domains follow at residues 337-414 (RNLF…YGKA) and 418-492 (TRLW…FAKA). A Phosphothreonine modification is found at T532. The tract at residues 547–705 (EGDWTSPSKS…KPLEEPKHET (159 aa)) is disordered. Phosphoserine is present on residues S552, S556, and S562. Basic and acidic residues-rich tracts occupy residues 573 to 616 (RSGE…ERSR) and 626 to 646 (RGSD…EGTK). The Nuclear localization signal signature appears at 593 to 597 (RRKRR). Residues 647-657 (ESSSNSLSNSR) show a composition bias toward low complexity. The segment covering 671–703 (EAADSSHGKKARDSERNHRTTEAEPKPLEEPKH) has biased composition (basic and acidic residues). K702 is covalently cross-linked (Glycyl lysine isopeptide (Lys-Gly) (interchain with G-Cter in SUMO2)). The region spanning 711–889 (LSEYAQTLQL…HMVIVIVRDT (179 aa)) is the SPOC domain. Residues 722–890 (WNGLLVLKNS…MVIVIVRDTA (169 aa)) form an interaction with Epstein-Barr virus BMLF1 region.

The protein belongs to the RRM Spen family. Component of the WMM complex, a N6-methyltransferase complex composed of a catalytic subcomplex, named MAC, and of an associated subcomplex, named MACOM. The MAC subcomplex is composed of METTL3 and METTL14. The MACOM subcomplex is composed of WTAP, ZC3H13, CBLL1/HAKAI, VIRMA, and, in some cases of RBM15 (RBM15 or RBM15B). May interact with NCOR2. Interacts with NXF1, the interaction is required to promote mRNA export. As to quaternary structure, (Microbial infection) Interacts (via the SPOC domain) with Epstein-Barr virus BMLF1 (via the N-terminus); the interaction is direct. As to expression, ubiquitously expressed.

Its subcellular location is the nucleus. It localises to the nucleoplasm. The protein localises to the nucleus speckle. The protein resides in the nucleus envelope. RNA-binding protein that acts as a key regulator of N6-methyladenosine (m6A) methylation of RNAs, thereby regulating different processes, such as alternative splicing of mRNAs and X chromosome inactivation mediated by Xist RNA. Associated component of the WMM complex, a complex that mediates N6-methyladenosine (m6A) methylation of RNAs, a modification that plays a role in the efficiency of mRNA splicing and RNA processing. Plays a key role in m6A methylation, possibly by binding target RNAs and recruiting the WMM complex. Involved in random X inactivation mediated by Xist RNA: acts by binding Xist RNA and recruiting the WMM complex, which mediates m6A methylation, leading to target YTHDC1 reader on Xist RNA and promoting transcription repression activity of Xist. Functions in the regulation of alternative or illicit splicing, possibly by regulating m6A methylation. Inhibits pre-mRNA splicing. Also functions as a mRNA export factor by acting as a cofactor for the nuclear export receptor NXF1. This is Putative RNA-binding protein 15B from Homo sapiens (Human).